A 226-amino-acid chain; its full sequence is 7-cyano-7-deazaguanine synthase (226 aa).

9–19 (LSGGLDSTVAT) serves as a coordination point for ATP. Cys192, Cys200, Cys203, and Cys206 together coordinate Zn(2+).

The protein belongs to the QueC family. Zn(2+) serves as cofactor.

The catalysed reaction is 7-carboxy-7-deazaguanine + NH4(+) + ATP = 7-cyano-7-deazaguanine + ADP + phosphate + H2O + H(+). The protein operates within purine metabolism; 7-cyano-7-deazaguanine biosynthesis. Functionally, catalyzes the ATP-dependent conversion of 7-carboxy-7-deazaguanine (CDG) to 7-cyano-7-deazaguanine (preQ(0)). The chain is 7-cyano-7-deazaguanine synthase from Methanosphaera stadtmanae (strain ATCC 43021 / DSM 3091 / JCM 11832 / MCB-3).